The following is a 124-amino-acid chain: MATVNQLVRKPRAPKVDKTNVPALEACPQKRGVCTRVYTTAPKKPNSALRKVARVRLTNGFEVTSYIGGEGHNLQEHSVILIRGGRVKDLPGVRYHTIRGALDCAGVNARRQARSKYGAKRPKS.

D89 is subject to 3-methylthioaspartic acid.

This sequence belongs to the universal ribosomal protein uS12 family. As to quaternary structure, part of the 30S ribosomal subunit. Contacts proteins S8 and S17. May interact with IF1 in the 30S initiation complex.

In terms of biological role, with S4 and S5 plays an important role in translational accuracy. Interacts with and stabilizes bases of the 16S rRNA that are involved in tRNA selection in the A site and with the mRNA backbone. Located at the interface of the 30S and 50S subunits, it traverses the body of the 30S subunit contacting proteins on the other side and probably holding the rRNA structure together. The combined cluster of proteins S8, S12 and S17 appears to hold together the shoulder and platform of the 30S subunit. The sequence is that of Small ribosomal subunit protein uS12 from Shewanella amazonensis (strain ATCC BAA-1098 / SB2B).